Reading from the N-terminus, the 255-residue chain is ATP-dependent L-serine kinase (255 aa).

Glu-36 is a catalytic residue. O-phospho-L-serine is bound at residue Val-74. Mg(2+) is bound at residue Asp-75. Residues Gly-76, His-77, His-78, Trp-108, Lys-234, Thr-236, and His-238 each coordinate O-phospho-L-serine.

The protein belongs to the SerK family. Mg(2+) is required as a cofactor.

The catalysed reaction is L-serine + ATP = O-phospho-L-serine + ADP + H(+). Its function is as follows. Free serine kinase that uses ATP to phosphorylate L-serine to yield O-phospho-L-serine and ADP. The sequence is that of ATP-dependent L-serine kinase from Desulfurococcus mucosus (strain ATCC 35584 / DSM 2162 / JCM 9187 / O7/1).